A 63-amino-acid chain; its full sequence is Disintegrin schistatin-like subunit B (63 aa).

The Disintegrin domain occupies 1–63; that stretch reads NSVNPCCDPQ…TPDCPRNRYN (63 aa). Cystine bridges form between C6–C29, C20–C26, C25–C50, and C38–C57. The Cell attachment site signature appears at 42–44; sequence RGD.

Belongs to the disintegrin family. Dimeric disintegrin subfamily. In terms of assembly, heterodimer with subunit A; disulfide-linked. As to expression, expressed by the venom gland.

The protein resides in the secreted. In terms of biological role, may bind to both alpha-IIb/beta-3 (ITGA2B/ITGB3) and alpha-V/beta-3 (ITGAV/ITGB3) integrins, and may inhibit platelet aggregation. This Echis carinatus (Saw-scaled viper) protein is Disintegrin schistatin-like subunit B.